The sequence spans 503 residues: Mitogen-activated protein kinase kinae mkk2 (503 aa).

Residues 1–130 (MSSSPVPLLR…ASGPASASSS (130 aa)) are disordered. A compositionally biased stretch (pro residues) spans 53 to 66 (APQPQRPSTRPAPP). The span at 100-115 (TGLNESTGHSRSSSFT) shows a compositional bias: polar residues. Positions 121–130 (ASGPASASSS) are enriched in low complexity. The Protein kinase domain maps to 211-481 (IIELGSLGEG…PWRMLEHPWM (271 aa)). ATP is bound by residues 217–225 (LGEGAGGAV) and Lys240. Asp338 acts as the Proton acceptor in catalysis.

It belongs to the protein kinase superfamily. STE Ser/Thr protein kinase family. MAP kinase kinase subfamily.

It catalyses the reaction L-seryl-[protein] + ATP = O-phospho-L-seryl-[protein] + ADP + H(+). The enzyme catalyses L-threonyl-[protein] + ATP = O-phospho-L-threonyl-[protein] + ADP + H(+). Mitogen-activated kinase kinase (MAPKK), part of the cell wall integrity (CWI) signaling pathway composed by three protein kinases bck1, mkk2 and mpkA and responsible for the maintaining of cell-wall integrity balance. The CWI pathway also regulates the oxidative stress response, as well as the production of some secondary metabolites including pyomelanin. This chain is Mitogen-activated protein kinase kinae mkk2, found in Aspergillus fumigatus (strain CBS 144.89 / FGSC A1163 / CEA10) (Neosartorya fumigata).